Reading from the N-terminus, the 192-residue chain is Casparian strip membrane protein 1 (192 aa).

Topologically, residues 1 to 30 (MSTTVDVPESSNVAKGKAIAVARPGGWKKG) are cytoplasmic. A helical transmembrane segment spans residues 31 to 51 (LAIMDFILRLGGIAASLGAAA). Over 52–80 (TMGTSDQTLPFFTQFFQFEASYDSFTTFQ) the chain is Extracellular. Residues 81–101 (FFVITMALVAGYLVLSLPFSV) traverse the membrane as a helical segment. The Cytoplasmic portion of the chain corresponds to 102–113 (VAIIRPHAPGPR). Residues 114 to 134 (LFLIILDTVFLTLATASGASA) traverse the membrane as a helical segment. At 135-166 (AAIVYLAHNGNQDSNWLAICNQFGDFCAQTSG) the chain is on the extracellular side. The helical transmembrane segment at 167–187 (AVVASFVAVVILVLLVIMSAL) threads the bilayer. Residues 188 to 192 (ALRRH) are Cytoplasmic-facing.

This sequence belongs to the Casparian strip membrane proteins (CASP) family. Homodimer and heterodimers.

The protein localises to the cell membrane. Functionally, regulates membrane-cell wall junctions and localized cell wall deposition. Required for establishment of the Casparian strip membrane domain (CSD) and the subsequent formation of Casparian strips, a cell wall modification of the root endodermis that determines an apoplastic barrier between the intraorganismal apoplasm and the extraorganismal apoplasm and prevents lateral diffusion. The polypeptide is Casparian strip membrane protein 1 (Vigna unguiculata (Cowpea)).